The sequence spans 242 residues: Probable septum site-determining protein MinC (242 aa).

The protein belongs to the MinC family. Interacts with MinD and FtsZ.

In terms of biological role, cell division inhibitor that blocks the formation of polar Z ring septums. Rapidly oscillates between the poles of the cell to destabilize FtsZ filaments that have formed before they mature into polar Z rings. Prevents FtsZ polymerization. This chain is Probable septum site-determining protein MinC, found in Brucella anthropi (strain ATCC 49188 / DSM 6882 / CCUG 24695 / JCM 21032 / LMG 3331 / NBRC 15819 / NCTC 12168 / Alc 37) (Ochrobactrum anthropi).